The following is a 103-amino-acid chain: Small ribosomal subunit protein uS10 (103 aa).

It belongs to the universal ribosomal protein uS10 family. As to quaternary structure, part of the 30S ribosomal subunit.

Its function is as follows. Involved in the binding of tRNA to the ribosomes. The sequence is that of Small ribosomal subunit protein uS10 from Paraburkholderia xenovorans (strain LB400).